The sequence spans 311 residues: MAYKDLLNCKIITAFITPFHEDGSINFGAIPDLIEHLLAHHTDGILLAGTTAESPTLTHDEELELFAAVQKVVKGRVPLIAGVGTNETRDSIEFVKEVDAFGGFAAGLAIVPYYNKPSQEGMYQHFKAIADASNLPIIIYNIPGRVVVEMTPETMLRLAEHPNIIGVKECTSLANMAYLIEHRPEEFLIYTGEDGDAFHAMNLGADGVISVASHTNGDEMFEMLDAIEHNDIKKAAAIQRKFIPKVNALFSYPSPAPVKAVLNYLGFAAGPTRLPLVPAPEEDAKRIIKVVVDGDYQATKETVKGVLRPDY.

Thr-51 contributes to the pyruvate binding site. Tyr-140 (proton donor/acceptor) is an active-site residue. Residue Lys-168 is the Schiff-base intermediate with substrate of the active site. A pyruvate-binding site is contributed by Ile-209.

Belongs to the DapA family. In terms of assembly, homotetramer; dimer of dimers.

The protein resides in the cytoplasm. It carries out the reaction L-aspartate 4-semialdehyde + pyruvate = (2S,4S)-4-hydroxy-2,3,4,5-tetrahydrodipicolinate + H2O + H(+). Its pathway is amino-acid biosynthesis; L-lysine biosynthesis via DAP pathway; (S)-tetrahydrodipicolinate from L-aspartate: step 3/4. In terms of biological role, catalyzes the condensation of (S)-aspartate-beta-semialdehyde [(S)-ASA] and pyruvate to 4-hydroxy-tetrahydrodipicolinate (HTPA). This Streptococcus gordonii (strain Challis / ATCC 35105 / BCRC 15272 / CH1 / DL1 / V288) protein is 4-hydroxy-tetrahydrodipicolinate synthase.